The sequence spans 563 residues: Protein disulfide isomerase-like 1-4 (563 aa).

The N-terminal stretch at 1–22 (MRSRSLLLVALATLLLHASASA) is a signal peptide. Residues 40-64 (NDPDGWLQEGSPDDDDDDDLFHHGQ) are disordered. A Thioredoxin 1 domain is found at 46 to 180 (LQEGSPDDDD…IVSWVNKKLA (135 aa)). N82 carries an N-linked (GlcNAc...) asparagine glycan. Catalysis depends on nucleophile residues C102 and C105. C102 and C105 are joined by a disulfide. N185 and N315 each carry an N-linked (GlcNAc...) asparagine glycan. The 130-residue stretch at 394–523 (FLEEKLTPFY…MYKFIKKHAS (130 aa)) folds into the Thioredoxin 2 domain. Active-site nucleophile residues include C444 and C447. C444 and C447 are disulfide-bonded. Over residues 529–542 (KRPDSSATKTEKDQ) the composition is skewed to basic and acidic residues. The tract at residues 529 to 563 (KRPDSSATKTEKDQSTASTNLRGERSSGTNFKDEL) is disordered. The span at 543–563 (STASTNLRGERSSGTNFKDEL) shows a compositional bias: polar residues. Positions 560–563 (KDEL) match the Prevents secretion from ER motif.

The protein belongs to the protein disulfide isomerase family.

Its subcellular location is the endoplasmic reticulum lumen. It catalyses the reaction Catalyzes the rearrangement of -S-S- bonds in proteins.. Acts as a protein-folding catalyst that interacts with nascent polypeptides to catalyze the formation, isomerization, and reduction or oxidation of disulfide bonds. May play a role in storage protein biogenesis. The polypeptide is Protein disulfide isomerase-like 1-4 (PDIL1-4) (Oryza sativa subsp. japonica (Rice)).